The primary structure comprises 262 residues: MAARRIADEPAYVLHSYDWSDSSLILETFTRHYGRVALVAKGAKKPTSNFRPVLLPLQPLRVTYTLGGEGHGEIHALKGAEWAGGHVMPTGDALLSGLYLNELLLRLLAREDTHAPLFDTYAGVVRVLATVDHEGEHGDALEPVLRSFELLLLREIGLLPGLDAETSTLAPLHAAARYALVPEAGLRPALSADRAALSGGQWLALQGALDEPARYTATLRAIATAEAPVAADLKTQLRALLQYHCGSPLLRTRQLMMDLQKL.

Belongs to the RecO family.

Involved in DNA repair and RecF pathway recombination. The protein is DNA repair protein RecO of Acidovorax ebreus (strain TPSY) (Diaphorobacter sp. (strain TPSY)).